The following is a 577-amino-acid chain: Optineurin (577 aa).

Disordered regions lie at residues 1–32 (MSHQPLSCLTEKEDSPSESTGNGPPHLAHPNL) and 101–143 (SHEN…KDQL). Residues 38–170 (EELLQQMKEL…VSELQLKLNS (133 aa)) adopt a coiled-coil conformation. An interaction with Rab8 region spans residues 58–209 (MKLNNQAMKG…GPTRTVSTGT (152 aa)). An LIR motif is present at residues 176-181 (DSFVEI). S177 bears the Phosphoserine; by TBK1 mark. Residues 186-197 (GEAEGSVKEIKH) are compositionally biased toward basic and acidic residues. Disordered regions lie at residues 186–209 (GEAEGSVKEIKHSPGPTRTVSTGT) and 261–297 (VSDFEKKTSNRSEIETQTEGSTEKENDEEKGPETVGS). Phosphoserine is present on S198. A coiled-coil region spans residues 239–508 (CLREGNQKVE…LLKENDAFED (270 aa)). Basic and acidic residues-rich tracts occupy residues 261-274 (VSDFEKKTSNRSEI) and 281-292 (STEKENDEEKGP). Residue S342 is modified to Phosphoserine. The tract at residues 411–577 (TRKESEKVDR…LQIHVMDCII (167 aa)) is interaction with HD. Residues 412 to 520 (RKESEKVDRA…RQSLMEMQSR (109 aa)) are interaction with MYO6. Positions 474–479 (DFHAER) match the UBAN motif. A Phosphoserine modification is found at S526. A CCHC NOA-type zinc finger spans residues 547–577 (QRNIPIHSCPKCGEVLPDIDTLQIHVMDCII). C555, C558, H571, and C575 together coordinate Zn(2+).

In terms of assembly, self-associates. Interacts with HD. Interacts with GTF3A. Interacts with MYO6. Interacts (via UBAN) with ubiquitinated TFRC. Interacts with GTP-bound Rab8 (RAB8A and/or RAB8B). Interacts with TBC1D17. Interacts with TBK1. Interacts with TRAF3. Binds to linear ubiquitin chains. Interacts with LC3 family members MAP1LC3A, MAP1LC3B, GABARAP, GABARAPL1 and GABARAPL2; OPTN phosphorylation increases the association (at least with MAP1LC3B). Interacts with RAB12; the interaction may be indirect. Interacts with TBK1; this interaction leads to the Golgi localization of TBK1 and its subsequent activation. Interacts with palmitoyltransferase ZDHHC17/HIP14; the interaction does not lead to palmitoylation of OPTN. Interacts with CYLD. Interacts with TOM1; the interaction is indirect and is mediated by MYO6, which acts as a bridge between TOM1 and OPTN. Interacts with USP12; the interaction is independent of USP12 deubiquitinase activity and may be involved in regulation of autophagic flux. (Microbial infection) Interacts with E3 14.7 kDa protein of group C human adenovirus. Interacts with Bluetongue virus protein NS3. Post-translationally, phosphorylated by TBK1, leading to restrict bacterial proliferation in case of infection. Phosphorylation is induced by phorbol esters and decreases its half-time. As to expression, present in aqueous humor of the eye (at protein level). Expressed in the trabecular meshwork (at protein level). Expressed in nonpigmented ciliary epithelium (at protein level). Expressed at high levels in skeletal muscle, also detected in heart, brain, pancreas, kidney, placenta and liver. Expressed in dermal fibroblasts (at protein level).

It is found in the cytoplasm. The protein localises to the perinuclear region. It localises to the golgi apparatus. Its subcellular location is the trans-Golgi network. The protein resides in the cytoplasmic vesicle. It is found in the autophagosome. The protein localises to the recycling endosome. Plays an important role in the maintenance of the Golgi complex, in membrane trafficking, in exocytosis, through its interaction with myosin VI and Rab8. Links myosin VI to the Golgi complex and plays an important role in Golgi ribbon formation. Plays a role in the activation of innate immune response during viral infection. Mechanistically, recruits TBK1 at the Golgi apparatus, promoting its trans-phosphorylation after RLR or TLR3 stimulation. In turn, activated TBK1 phosphorylates its downstream partner IRF3 to produce IFN-beta/IFNB1. Plays a neuroprotective role in the eye and optic nerve. May act by regulating membrane trafficking and cellular morphogenesis via a complex that contains Rab8 and huntingtin (HD). Mediates the interaction of Rab8 with the probable GTPase-activating protein TBC1D17 during Rab8-mediated endocytic trafficking, such as that of transferrin receptor (TFRC/TfR); regulates Rab8 recruitment to tubules emanating from the endocytic recycling compartment. Autophagy receptor that interacts directly with both the cargo to become degraded and an autophagy modifier of the MAP1 LC3 family; targets ubiquitin-coated bacteria (xenophagy), such as cytoplasmic Salmonella enterica, and appears to function in the same pathway as SQSTM1 and CALCOCO2/NDP52. Its function is as follows. (Microbial infection) May constitute a cellular target for various viruses, such as adenovirus E3 14.7 or Bluetongue virus, to inhibit innate immune response. During RNA virus infection, such as that of Sendai virus, negatively regulates the induction of IFNB1. The polypeptide is Optineurin (OPTN) (Homo sapiens (Human)).